The chain runs to 153 residues: Deoxyuridine 5'-triphosphate nucleotidohydrolase (153 aa).

Ser75, Gly88, Asp91, Tyr94, Lys99, Arg143, Phe148, and Gly149 together coordinate dUMP.

Belongs to the dUTPase family. In terms of assembly, homotrimer. It depends on Mg(2+) as a cofactor.

It carries out the reaction dUTP + H2O = dUMP + diphosphate + H(+). Its pathway is pyrimidine metabolism; dUMP biosynthesis; dUMP from dCTP (dUTP route): step 2/2. Involved in nucleotide metabolism via production of dUMP, the immediate precursor of thymidine nucleotides, and decreases the intracellular concentration of dUTP so that uracil cannot be incorporated into DNA. This is Deoxyuridine 5'-triphosphate nucleotidohydrolase (DUT1) from Eremothecium gossypii (strain ATCC 10895 / CBS 109.51 / FGSC 9923 / NRRL Y-1056) (Yeast).